The following is a 130-amino-acid chain: Small ribosomal subunit protein uS11 (130 aa).

This sequence belongs to the universal ribosomal protein uS11 family. As to quaternary structure, part of the 30S ribosomal subunit. Interacts with proteins S7 and S18. Binds to IF-3.

Located on the platform of the 30S subunit, it bridges several disparate RNA helices of the 16S rRNA. Forms part of the Shine-Dalgarno cleft in the 70S ribosome. This Sulfurimonas denitrificans (strain ATCC 33889 / DSM 1251) (Thiomicrospira denitrificans (strain ATCC 33889 / DSM 1251)) protein is Small ribosomal subunit protein uS11.